A 340-amino-acid polypeptide reads, in one-letter code: Beta-hexosaminidase (340 aa).

Residues D60, R68, R127, and 157–158 each bind substrate; that span reads KH. H170 (proton donor/acceptor) is an active-site residue. The active-site Nucleophile is D242.

The protein belongs to the glycosyl hydrolase 3 family. NagZ subfamily.

It is found in the cytoplasm. The catalysed reaction is Hydrolysis of terminal non-reducing N-acetyl-D-hexosamine residues in N-acetyl-beta-D-hexosaminides.. The protein operates within cell wall biogenesis; peptidoglycan recycling. Functionally, plays a role in peptidoglycan recycling by cleaving the terminal beta-1,4-linked N-acetylglucosamine (GlcNAc) from peptide-linked peptidoglycan fragments, giving rise to free GlcNAc, anhydro-N-acetylmuramic acid and anhydro-N-acetylmuramic acid-linked peptides. The sequence is that of Beta-hexosaminidase from Glaesserella parasuis serovar 5 (strain SH0165) (Haemophilus parasuis).